The primary structure comprises 105 residues: Large ribosomal subunit protein bL21 (105 aa).

Belongs to the bacterial ribosomal protein bL21 family. In terms of assembly, part of the 50S ribosomal subunit. Contacts protein L20.

Its function is as follows. This protein binds to 23S rRNA in the presence of protein L20. The protein is Large ribosomal subunit protein bL21 of Rhizobium etli (strain CIAT 652).